A 411-amino-acid chain; its full sequence is Glycerol-3-phosphate dehydrogenase [NAD(+)] (411 aa).

Residues 71–76, F103, and F159 each bind NAD(+); that span reads GSGNWG. Residue K182 participates in substrate binding. A215 is a binding site for NAD(+). K275 (proton acceptor) is an active-site residue. NAD(+) is bound by residues R340 and Q369. 340–341 provides a ligand contact to substrate; it reads RN.

The protein belongs to the NAD-dependent glycerol-3-phosphate dehydrogenase family.

It catalyses the reaction sn-glycerol 3-phosphate + NAD(+) = dihydroxyacetone phosphate + NADH + H(+). This Lachancea thermotolerans (Yeast) protein is Glycerol-3-phosphate dehydrogenase [NAD(+)] (GPD).